A 341-amino-acid polypeptide reads, in one-letter code: Heme A synthase (341 aa).

Helical transmembrane passes span 7–27 (VTVW…IGGI), 92–112 (LFGR…AITK), 118–138 (MVAK…MGWF), 159–179 (LFLT…CAGV), 190–210 (FFTA…GALV), 253–273 (FLHR…PFWL), 280–300 (LFLA…VSVV), and 302–322 (IFLA…GVHM). H255 provides a ligand contact to heme. Residue H308 coordinates heme.

It belongs to the COX15/CtaA family. Type 2 subfamily. As to quaternary structure, interacts with CtaB. Heme b serves as cofactor.

Its subcellular location is the cell membrane. It catalyses the reaction Fe(II)-heme o + 2 A + H2O = Fe(II)-heme a + 2 AH2. It functions in the pathway porphyrin-containing compound metabolism; heme A biosynthesis; heme A from heme O: step 1/1. Catalyzes the conversion of heme O to heme A by two successive hydroxylations of the methyl group at C8. The first hydroxylation forms heme I, the second hydroxylation results in an unstable dihydroxymethyl group, which spontaneously dehydrates, resulting in the formyl group of heme A. The polypeptide is Heme A synthase (Anaplasma marginale (strain Florida)).